The sequence spans 110 residues: UPF0060 membrane protein Pcryo_1341 (110 aa).

The next 4 helical transmembrane spans lie at 7–27 (VGLF…PYLW), 33–53 (SIWL…LLTL), 63–83 (AAYG…VDGI), and 87–107 (TWDI…MFAP).

The protein belongs to the UPF0060 family.

It localises to the cell inner membrane. The polypeptide is UPF0060 membrane protein Pcryo_1341 (Psychrobacter cryohalolentis (strain ATCC BAA-1226 / DSM 17306 / VKM B-2378 / K5)).